Consider the following 201-residue polypeptide: ATP-dependent Clp protease proteolytic subunit (201 aa).

Residue serine 101 is the Nucleophile of the active site. Histidine 126 is a catalytic residue.

This sequence belongs to the peptidase S14 family. As to quaternary structure, fourteen ClpP subunits assemble into 2 heptameric rings which stack back to back to give a disk-like structure with a central cavity, resembling the structure of eukaryotic proteasomes.

Its subcellular location is the cytoplasm. It catalyses the reaction Hydrolysis of proteins to small peptides in the presence of ATP and magnesium. alpha-casein is the usual test substrate. In the absence of ATP, only oligopeptides shorter than five residues are hydrolyzed (such as succinyl-Leu-Tyr-|-NHMec, and Leu-Tyr-Leu-|-Tyr-Trp, in which cleavage of the -Tyr-|-Leu- and -Tyr-|-Trp bonds also occurs).. In terms of biological role, cleaves peptides in various proteins in a process that requires ATP hydrolysis. Has a chymotrypsin-like activity. Plays a major role in the degradation of misfolded proteins. The sequence is that of ATP-dependent Clp protease proteolytic subunit from Francisella tularensis subsp. tularensis (strain FSC 198).